A 121-amino-acid chain; its full sequence is MTKLDTTAEVKAIARYVRMSPLKVRRVLDQIRGRSYREALIILEFMPYKACEPVLKVLRSAVANAEHNEGLEPADLVVSQAFADGGPSLRRFRPRAQGRAYQIRKPTCHITVAVAPALADN.

This sequence belongs to the universal ribosomal protein uL22 family. In terms of assembly, part of the 50S ribosomal subunit.

Its function is as follows. This protein binds specifically to 23S rRNA; its binding is stimulated by other ribosomal proteins, e.g. L4, L17, and L20. It is important during the early stages of 50S assembly. It makes multiple contacts with different domains of the 23S rRNA in the assembled 50S subunit and ribosome. Functionally, the globular domain of the protein is located near the polypeptide exit tunnel on the outside of the subunit, while an extended beta-hairpin is found that lines the wall of the exit tunnel in the center of the 70S ribosome. The polypeptide is Large ribosomal subunit protein uL22 (Synechocystis sp. (strain ATCC 27184 / PCC 6803 / Kazusa)).